Consider the following 1045-residue polypeptide: V(D)J recombination-activating protein 1 (1045 aa).

3 disordered regions span residues 33–55, 67–87, and 222–253; these read ERRP…QETY, LGSA…KSNV, and KRKS…SSGN. Polar residues-rich tracts occupy residues 44-55 and 69-87; these read SEVSYNSSQETY and SAPQ…KSNV. Residues C270, H274, C294, C297, H299, C309, H311, C314, C317, C329, C332, C359, C364, H376, and H380 each coordinate Zn(2+). Residues 294-333 form an RING-type zinc finger; sequence CLVCEHILSDPVQTSCKHLFCRICILKYIKLMGCYCPSCK. An RAG1-type zinc finger spans residues 355–384; sequence LLLKCTVSGCDEEISLGKYSHHISKHKETK. The NBD DNA-binding region spans 395 to 462; that stretch reads GGRPRQHLLT…QADELEAIME (68 aa). A divalent metal cation is bound by residues D606, D714, and E968.

This sequence belongs to the RAG1 family. Homodimer. Component of the RAG complex composed of core components rag1 and rag2. Mg(2+) is required as a cofactor. Mn(2+) serves as cofactor. In terms of tissue distribution, expressed within the thymus, liver and spleen in juvenile frogs, and within the thymus and bone marrow of adults.

It is found in the nucleus. The enzyme catalyses S-ubiquitinyl-[E2 ubiquitin-conjugating enzyme]-L-cysteine + [acceptor protein]-L-lysine = [E2 ubiquitin-conjugating enzyme]-L-cysteine + N(6)-ubiquitinyl-[acceptor protein]-L-lysine.. Its function is as follows. Catalytic component of the RAG complex, a multiprotein complex that mediates the DNA cleavage phase during V(D)J recombination. V(D)J recombination assembles a diverse repertoire of immunoglobulin and T-cell receptor genes in developing B and T lymphocytes through rearrangement of different V (variable), in some cases D (diversity), and J (joining) gene segments. In the RAG complex, RAG1 mediates the DNA-binding to the conserved recombination signal sequences (RSS) and catalyzes the DNA cleavage activities by introducing a double-strand break between the RSS and the adjacent coding segment. RAG2 is not a catalytic component but is required for all known catalytic activities. DNA cleavage occurs in 2 steps: a first nick is introduced in the top strand immediately upstream of the heptamer, generating a 3'-hydroxyl group that can attack the phosphodiester bond on the opposite strand in a direct transesterification reaction, thereby creating 4 DNA ends: 2 hairpin coding ends and 2 blunt, 5'-phosphorylated ends. In addition to its endonuclease activity, RAG1 also acts as an E3 ubiquitin-protein ligase that mediates monoubiquitination of histone H3. Histone H3 monoubiquitination is required for the joining step of V(D)J recombination. The protein is V(D)J recombination-activating protein 1 (rag1) of Xenopus laevis (African clawed frog).